The primary structure comprises 397 residues: Tryptophan synthase beta chain (397 aa).

K90 is subject to N6-(pyridoxal phosphate)lysine.

It belongs to the TrpB family. Tetramer of two alpha and two beta chains. Pyridoxal 5'-phosphate serves as cofactor.

It carries out the reaction (1S,2R)-1-C-(indol-3-yl)glycerol 3-phosphate + L-serine = D-glyceraldehyde 3-phosphate + L-tryptophan + H2O. It functions in the pathway amino-acid biosynthesis; L-tryptophan biosynthesis; L-tryptophan from chorismate: step 5/5. Its function is as follows. The beta subunit is responsible for the synthesis of L-tryptophan from indole and L-serine. The polypeptide is Tryptophan synthase beta chain (Nitrosomonas europaea (strain ATCC 19718 / CIP 103999 / KCTC 2705 / NBRC 14298)).